Here is a 282-residue protein sequence, read N- to C-terminus: Protoheme IX farnesyltransferase (282 aa).

9 helical membrane passes run 9–29 (LAKP…FLLA), 39–59 (LPLF…GCVF), 79–99 (LVTG…LLIL), 102–122 (LVLY…GFIV), 139–159 (VLGG…VVNI), 165–185 (LALF…IAML), 210–230 (IMLF…VLGS), 231–251 (ADLF…YKSI), and 261–281 (VFAK…CLTM).

The protein belongs to the UbiA prenyltransferase family. Protoheme IX farnesyltransferase subfamily.

Its subcellular location is the cell inner membrane. The enzyme catalyses heme b + (2E,6E)-farnesyl diphosphate + H2O = Fe(II)-heme o + diphosphate. It functions in the pathway porphyrin-containing compound metabolism; heme O biosynthesis; heme O from protoheme: step 1/1. Functionally, converts heme B (protoheme IX) to heme O by substitution of the vinyl group on carbon 2 of heme B porphyrin ring with a hydroxyethyl farnesyl side group. This chain is Protoheme IX farnesyltransferase, found in Francisella tularensis subsp. tularensis (strain FSC 198).